The primary structure comprises 353 residues: MACCIPDELKEQKRINQEIERQLKRDKRDARRELKLLLLGTGESGKSTFIKQMRIIHGAGYSDEDKRSHIKIVYQNIFMAMHAMIRAMDTLNIQYINPANRENGNMIRQIDYETVTTFDKPCVDAIISLWNDDGIQECYDRRREYQLTDSAKYYLDSVERISQQDYLPTLQDILRVRVPTTGIIEYPFDLDSIIFRMVDVGGQRSERRKWIHCFENVTSIMFLVALSEYDQVLVESDNENRMEESKALFRTIITYPWFQNSSVILFLNKKDLLEEKIMHSHLVDYFPEFDGPKKEASTAREFILKMFVELNPDPDKIIYSHFTCATDTENIRFVFAAVKDTILQLNLKEYNLV.

S-palmitoyl cysteine attachment occurs at residues Cys3 and Cys4. The 322-residue stretch at 32–353 (RELKLLLLGT…QLNLKEYNLV (322 aa)) folds into the G-alpha domain. The interval 35–48 (KLLLLGTGESGKST) is G1 motif. GTP is bound by residues 40–47 (GTGESGKS), 174–180 (LRVRVPT), 199–203 (DVGGQ), 268–271 (NKKD), and Ala325. Ser47 and Thr180 together coordinate Mg(2+). The G2 motif stretch occupies residues 172 to 180 (DILRVRVPT). The segment at 195–204 (FRMVDVGGQR) is G3 motif. Residues 264–271 (ILFLNKKD) form a G4 motif region. The tract at residues 323–328 (TCATDT) is G5 motif.

This sequence belongs to the G-alpha family. G(q) subfamily. In terms of assembly, g proteins are composed of 3 units; alpha, beta and gamma. The alpha chain contains the guanine nucleotide binding site.

Functionally, guanine nucleotide-binding proteins (G proteins) are involved as modulators or transducers in various transmembrane signaling systems. This Lymnaea stagnalis (Great pond snail) protein is Guanine nucleotide-binding protein G(q) subunit alpha.